Here is a 217-residue protein sequence, read N- to C-terminus: MSLRSLFVAGLATLALAVPAPQIQARQGMSSNELESGPCRDVTFIFARGSTEQGNMGLIVGPGVCSSLKKDLGSDKVACQGVGGAYTAQLAPNFLSQNTNQASINAATDMFDLANTKCPNTKIVAGGYSQGSAVIDNTIQALGSDLKAKVKGVVLFGFTRNVADKGQIPGYPKDQTKIYCAVGDMVCVNTLIITPAHLTYGADAGDAAKFLASKVQE.

Residues 1–17 (MSLRSLFVAGLATLALA) form the signal peptide. 2 cysteine pairs are disulfide-bonded: Cys-39–Cys-118 and Cys-65–Cys-79. Ser-129 functions as the Nucleophile in the catalytic mechanism. Cys-180 and Cys-187 are joined by a disulfide. Residue Asp-184 is part of the active site. The active-site Proton donor/acceptor is His-197.

This sequence belongs to the cutinase family.

It localises to the secreted. It carries out the reaction cutin + H2O = cutin monomers.. In terms of biological role, catalyzes the hydrolysis of complex carboxylic polyesters found in the cell wall of plants. Degrades cutin, a macromolecule that forms the structure of the plant cuticle. This chain is Probable cutinase 3, found in Aspergillus fumigatus (strain CBS 144.89 / FGSC A1163 / CEA10) (Neosartorya fumigata).